Reading from the N-terminus, the 216-residue chain is Probable nicotinate-nucleotide adenylyltransferase (216 aa).

The protein belongs to the NadD family.

The enzyme catalyses nicotinate beta-D-ribonucleotide + ATP + H(+) = deamido-NAD(+) + diphosphate. It participates in cofactor biosynthesis; NAD(+) biosynthesis; deamido-NAD(+) from nicotinate D-ribonucleotide: step 1/1. Functionally, catalyzes the reversible adenylation of nicotinate mononucleotide (NaMN) to nicotinic acid adenine dinucleotide (NaAD). This Geobacillus kaustophilus (strain HTA426) protein is Probable nicotinate-nucleotide adenylyltransferase.